We begin with the raw amino-acid sequence, 207 residues long: 3-demethoxyubiquinol 3-hydroxylase (207 aa).

The Fe cation site is built by Glu-56, Glu-86, His-89, Glu-138, Glu-170, and His-173.

Belongs to the COQ7 family. Fe cation serves as cofactor.

It localises to the cell membrane. It catalyses the reaction a 5-methoxy-2-methyl-3-(all-trans-polyprenyl)benzene-1,4-diol + AH2 + O2 = a 3-demethylubiquinol + A + H2O. Its pathway is cofactor biosynthesis; ubiquinone biosynthesis. Catalyzes the hydroxylation of 2-nonaprenyl-3-methyl-6-methoxy-1,4-benzoquinol during ubiquinone biosynthesis. The chain is 3-demethoxyubiquinol 3-hydroxylase from Cupriavidus pinatubonensis (strain JMP 134 / LMG 1197) (Cupriavidus necator (strain JMP 134)).